The chain runs to 703 residues: DNA ligase (703 aa).

NAD(+)-binding positions include 44–48 (DAEYD), 93–94 (SL), and Glu-127. Catalysis depends on Lys-129, which acts as the N6-AMP-lysine intermediate. Residues Arg-150, Glu-186, Lys-302, and Lys-326 each coordinate NAD(+). Positions 420, 422, 444, and 450 each coordinate Zn(2+). Residues 625–703 (VADSPVAGKT…EDMWFQRIGA (79 aa)) form the BRCT domain.

It belongs to the NAD-dependent DNA ligase family. LigA subfamily. The cofactor is Mg(2+). Requires Mn(2+) as cofactor.

The enzyme catalyses NAD(+) + (deoxyribonucleotide)n-3'-hydroxyl + 5'-phospho-(deoxyribonucleotide)m = (deoxyribonucleotide)n+m + AMP + beta-nicotinamide D-nucleotide.. In terms of biological role, DNA ligase that catalyzes the formation of phosphodiester linkages between 5'-phosphoryl and 3'-hydroxyl groups in double-stranded DNA using NAD as a coenzyme and as the energy source for the reaction. It is essential for DNA replication and repair of damaged DNA. In Chelativorans sp. (strain BNC1), this protein is DNA ligase.